The primary structure comprises 358 residues: Cilia- and flagella-associated protein 263 (358 aa).

Coiled coils occupy residues 93–138, 176–200, and 266–343; these read YKKM…FKRN, RKNSALLTHKKKQQAQLRQQEEMAE, and RTKL…YTKS.

This sequence belongs to the CFAP263 family. Forms a complex with CFAP184; the interaction is required for functional activity in cilia. Interacts with HAP1 and PCM1.

The protein localises to the cytoplasm. Its subcellular location is the cytoskeleton. It is found in the microtubule organizing center. It localises to the centrosome. The protein resides in the centriolar satellite. The protein localises to the cell projection. Its subcellular location is the cilium. Component of centriolar satellites contributing to primary cilium formation. In complex with CFAP263, acts as a regulator of ciliary beating that connects radial spoke 3 (RS3) to the inner dynein arm (IDA) and the nexin-dynein regulatory complex (N-DRC). The complex is positioned parallel to N-DRC and forms a connection between the arch at the base of RS3, the IDA tail and N-DRC. This is Cilia- and flagella-associated protein 263 (cfap263) from Danio rerio (Zebrafish).